The chain runs to 315 residues: Olfactory receptor 52R1 (315 aa).

Residues 1–28 (MVLASGNSSSHPVSFILLGIPGLESFQL) are Extracellular-facing. N-linked (GlcNAc...) asparagine glycosylation is present at N7. A helical transmembrane segment spans residues 29-49 (WIAFPFCATYAVAVVGNITLL). At 50–57 (HVIRIDHT) the chain is on the cytoplasmic side. Residues 58–78 (LHEPMYLFLAMLAITDLVLSS) traverse the membrane as a helical segment. Topologically, residues 79–102 (STQPKMLAIFWFHAHEIQYHACLI) are extracellular. An intrachain disulfide couples C100 to C192. Residues 103–123 (QVFFIHAFSSVESGVLMAMAL) form a helical membrane-spanning segment. At 124-142 (DCYVAICFPLRHSSILTPS) the chain is on the cytoplasmic side. The helical transmembrane segment at 143–163 (VVIKLGTIVMLRGLLWVSPFC) threads the bilayer. Topologically, residues 164-199 (FMVSRMPFCQHQAIPQSYCEHMAVLKLVCADTSISR) are extracellular. Residues 200 to 220 (GNGLFVAFSVAGFDMIVIGMS) traverse the membrane as a helical segment. Topologically, residues 221–240 (YVMILRAVLQLPSGEARLKA) are cytoplasmic. A helical transmembrane segment spans residues 241 to 261 (FSTRSSHICVILALYIPALFS). The Extracellular portion of the chain corresponds to 262–276 (FLTYRFGHDVPRVVH). A helical transmembrane segment spans residues 277 to 297 (ILFANLYLLIPPMLNPIIYGV). Residues 298 to 315 (RTKQIGDRVIQGCCGNIP) lie on the Cytoplasmic side of the membrane.

This sequence belongs to the G-protein coupled receptor 1 family.

Its subcellular location is the cell membrane. Its function is as follows. Odorant receptor. In Homo sapiens (Human), this protein is Olfactory receptor 52R1 (OR52R1).